The sequence spans 128 residues: Fumarate reductase subunit C (128 aa).

The next 3 membrane-spanning stretches (helical) occupy residues 31–51 (ATCIATIWFCLVLLYGVISLG), 67–87 (VVILNIISLAGLLYHAATLYV), and 106–126 (ILKNALWAITGLVSLLALVLV).

This sequence belongs to the FrdC family. In terms of assembly, part of an enzyme complex containing four subunits: a flavoprotein (FrdA), an iron-sulfur protein (FrdB), and two hydrophobic anchor proteins (FrdC and FrdD).

It localises to the cell inner membrane. Functionally, anchors the catalytic components of the fumarate reductase complex to the cell membrane, binds quinones. The sequence is that of Fumarate reductase subunit C from Haemophilus ducreyi (strain 35000HP / ATCC 700724).